A 487-amino-acid chain; its full sequence is Serine/threonine-protein kinase 4 (487 aa).

Met1 is subject to N-acetylmethionine. Residue Thr3 is modified to Phosphothreonine. A Protein kinase domain is found at 30–281 (FDVLEKLGEG…ATQLLQHPFV (252 aa)). Residues 36-44 (LGEGSYGSV) and Lys59 contribute to the ATP site. The active-site Proton acceptor is the Asp149. Thr183 is subject to Phosphothreonine; by autocatalysis. Phosphoserine is present on Ser265. Residues 290–310 (LRDLINEAMDVKLKRQEAQQR) are a coiled coil. The tract at residues 305–337 (QEAQQREVDQDDEENSEEDELDSGTMVRAVGDE) is disordered. Residues 313–326 (DQDDEENSEEDELD) are compositionally biased toward acidic residues. Residue Ser320 is modified to Phosphoserine. Phosphothreonine is present on residues Thr340 and Thr367. Thr387 is subject to Phosphothreonine; by PKB/AKT1. A phosphoserine mark is found at Ser410 and Ser414. Tyr433 is modified (phosphotyrosine). One can recognise an SARAH domain in the interval 433 to 480 (YEFLKSWTVEDLQKRLLALDPMMEQEIEEIRQKYQSKRQPILDAIEAK).

It belongs to the protein kinase superfamily. STE Ser/Thr protein kinase family. STE20 subfamily. As to quaternary structure, homodimer; mediated via the coiled-coil region. Interacts with NORE1, which inhibits autoactivation. Interacts with and stabilizes SAV1. Interacts with RASSF1. Interacts with FOXO3. Interacts with RASSF2 (via SARAH domain). Interacts with AR, PKB/AKT1, TNNI3 and SIRT1. Interacts with DLG5 (via PDZ domain 3). Interacts with MARK3 and SCRIB in the presence of DLG5. It depends on Mg(2+) as a cofactor. In terms of processing, autophosphorylated on serine and threonine residues. Phosphorylation at Thr-387 by PKB/AKT1, leads to inhibition of its: kinase activity, nuclear translocation and autophosphorylation at Thr-183. It also diminishes its cleavage by caspases and its ability to phosphorylate FOXO3. Post-translationally, proteolytically cleaved by caspase-3 during apoptosis at Asp-326 and Asp-349 resulting in a 37 kDa or a 39 kDa subunit respectively. The 39 kDa subunit is further cleaved into the 37 kDa form. Proteolytic cleavage results in kinase activation and nuclear translocation of the truncated form (MST1/N). It is less likely that cleavage at Asp-349 is a prerequisite for activation as this site is not conserved in the murine ortholog.

The protein localises to the cytoplasm. It is found in the nucleus. The enzyme catalyses L-seryl-[protein] + ATP = O-phospho-L-seryl-[protein] + ADP + H(+). The catalysed reaction is L-threonyl-[protein] + ATP = O-phospho-L-threonyl-[protein] + ADP + H(+). Inhibited by the C-terminal non-catalytic region. Activated by caspase-cleavage. Full activation also requires homodimerization and autophosphorylation of Thr-183. Activated by RASSF1 which acts by preventing its dephosphorylation. Its function is as follows. Stress-activated, pro-apoptotic kinase which, following caspase-cleavage, enters the nucleus and induces chromatin condensation followed by internucleosomal DNA fragmentation. Key component of the Hippo signaling pathway which plays a pivotal role in organ size control and tumor suppression by restricting proliferation and promoting apoptosis. The core of this pathway is composed of a kinase cascade wherein STK3/MST2 and STK4/MST1, in complex with its regulatory protein SAV1, phosphorylates and activates LATS1/2 in complex with its regulatory protein MOB1, which in turn phosphorylates and inactivates YAP1 oncoprotein and WWTR1/TAZ. Phosphorylation of YAP1 by LATS2 inhibits its translocation into the nucleus to regulate cellular genes important for cell proliferation, cell death, and cell migration. STK3/MST2 and STK4/MST1 are required to repress proliferation of mature hepatocytes, to prevent activation of facultative adult liver stem cells (oval cells), and to inhibit tumor formation. Phosphorylates 'Ser-14' of histone H2B (H2BS14ph) during apoptosis. Phosphorylates FOXO3 upon oxidative stress, which results in its nuclear translocation and cell death initiation. Phosphorylates MOBKL1A, MOBKL1B and RASSF2. Phosphorylates TNNI3 (cardiac Tn-I) and alters its binding affinity to TNNC1 (cardiac Tn-C) and TNNT2 (cardiac Tn-T). Phosphorylates FOXO1 on 'Ser-212' and regulates its activation and stimulates transcription of PMAIP1 in a FOXO1-dependent manner. Phosphorylates SIRT1 and inhibits SIRT1-mediated p53/TP53 deacetylation, thereby promoting p53/TP53 dependent transcription and apoptosis upon DNA damage. Acts as an inhibitor of PKB/AKT1. Phosphorylates AR on 'Ser-650' and suppresses its activity by intersecting with PKB/AKT1 signaling and antagonizing formation of AR-chromatin complexes. This Otolemur garnettii (Small-eared galago) protein is Serine/threonine-protein kinase 4 (STK4).